Here is a 90-residue protein sequence, read N- to C-terminus: uncharacterized protein (90 aa).

This is an uncharacterized protein from Escherichia coli (strain K12).